A 492-amino-acid polypeptide reads, in one-letter code: Transmembrane protein 104 homolog (492 aa).

The Cytoplasmic portion of the chain corresponds to 1-17; sequence MQSNTDSSTSGTYSQTV. Residues 18–38 form a helical membrane-spanning segment; sequence GLLYVFNLIVGTGALALPKAF. At 39-44 the chain is on the extracellular side; the sequence is QTAGWL. Residues 45–65 traverse the membrane as a helical segment; the sequence is LSITLLTFSAFMSYVAATFVI. Over 66-113 the chain is Cytoplasmic; that stretch reads EALSVANAVLSKKRRVEYDDVVVADGPSTFEISKKVEVSEMASMFLSK. The helical transmembrane segment at 114–134 threads the bilayer; sequence VSLVFSYFAIIIYLFGDLAIY. Over 135–176 the chain is Extracellular; it reads STTVPKSAMNIVCATINASTVKSSDPCHESWPEILTRMTVYR. N-linked (GlcNAc...) asparagine glycosylation is present at Asn-151. Residues 177–197 form a helical membrane-spanning segment; that stretch reads FFVIIFVVVVCLPMVIAGITK. Topologically, residues 198–209 are cytoplasmic; sequence TRHIQIMTTLSR. Residues 210-230 traverse the membrane as a helical segment; the sequence is WAAFILMISLATMQLSSDGAA. At 231 to 237 the chain is on the extracellular side; it reads AHPPAYN. A helical transmembrane segment spans residues 238 to 258; sequence FHGFGSLFGCAVYAFMCHHSI. Residues 259 to 274 lie on the Cytoplasmic side of the membrane; sequence PSLITPMRTKDNVFGK. Residues 275–295 form a helical membrane-spanning segment; sequence IALVYGVVGVFYFTLSLTGAF. Over 296–324 the chain is Extracellular; that stretch reads AFEHVQDIYTLNFFHDGNTSFIYSIIDYF. An N-linked (GlcNAc...) asparagine glycan is attached at Asn-313. Residues 325–345 traverse the membrane as a helical segment; it reads LALFPIITLTSSYPIIALTLI. Over 346-392 the chain is Cytoplasmic; it reads NNFNVVKDILCPKVGQENESLLEADSLVEDNDTDDEREARNARNEKS. Residues 393–413 traverse the membrane as a helical segment; sequence VFDVLVPALVLALPTFLSLLT. Residues 414–415 are Extracellular-facing; that stretch reads DD. A helical membrane pass occupies residues 416 to 436; it reads MLLLASITGSFPGVAVQFAIP. Over 437-466 the chain is Cytoplasmic; that stretch reads CLLVTAARKHARSVLNFPVPRKNNSPFQSP. The helical transmembrane segment at 467–487 threads the bilayer; the sequence is IWIVLISSWAGFSMIMVLLNL. The Extracellular portion of the chain corresponds to 488–492; sequence VGVKF.

Belongs to the TMEM104 family.

The protein localises to the membrane. The chain is Transmembrane protein 104 homolog from Caenorhabditis elegans.